Reading from the N-terminus, the 440-residue chain is UPF0761 membrane protein Rru_A2625 (440 aa).

A run of 7 helical transmembrane segments spans residues 29–49 (ILAT…THDI), 61–81 (LLAL…FPGF), 117–137 (GLTA…LLTI), 157–177 (LLVY…SFSL), 201–221 (PTLG…MLVP), 224–244 (PVPL…SALL), and 264–284 (ALAA…VVLM).

The protein belongs to the UPF0761 family.

The protein localises to the cell inner membrane. In Rhodospirillum rubrum (strain ATCC 11170 / ATH 1.1.1 / DSM 467 / LMG 4362 / NCIMB 8255 / S1), this protein is UPF0761 membrane protein Rru_A2625.